Here is a 293-residue protein sequence, read N- to C-terminus: Dehydrodolichyl diphosphate synthase complex subunit NUS1 (293 aa).

Transmembrane regions (helical) follow at residues 1 to 23, 35 to 56, and 117 to 135; these read MTGL…RTLT, WIWR…GFTL, and IASL…ISVY. Residues N144 and N271 are each glycosylated (N-linked (GlcNAc...) asparagine). The RXG motif; crucial for prenyltransferase activity motif lies at 290–292; it reads RLG. Isopentenyl diphosphate-binding residues include L291 and G292.

Belongs to the UPP synthase family. The active dehydrodolichyl diphosphate synthase complex is a heterotetramer composed of a dimer of heterodimer of DHDDS and NUS1. Interacts with NPC2. Mg(2+) is required as a cofactor.

It localises to the endoplasmic reticulum membrane. The catalysed reaction is n isopentenyl diphosphate + (2E,6E)-farnesyl diphosphate = a di-trans,poly-cis-polyprenyl diphosphate + n diphosphate. It functions in the pathway protein modification; protein glycosylation. The protein operates within lipid metabolism. With respect to regulation, activated by phospholipids including cardiolipin, phosphatidylcholine, phosphatidylethanolamine, phosphatidylinositol and phosphatidylserine. With DHDDS, forms the dehydrodolichyl diphosphate synthase (DDS) complex, an essential component of the dolichol monophosphate (Dol-P) biosynthetic machinery. Both subunits contribute to enzymatic activity, i.e. condensation of multiple copies of isopentenyl pyrophosphate (IPP) to farnesyl pyrophosphate (FPP) to produce dehydrodolichyl diphosphate (Dedol-PP), a precursor of dolichol phosphate which is utilized as a sugar carrier in protein glycosylation in the endoplasmic reticulum (ER). Synthesizes long-chain polyprenols, mostly of C95 and C100 chain length. Regulates the glycosylation and stability of nascent NPC2, thereby promoting trafficking of LDL-derived cholesterol. Acts as a specific receptor for the N-terminus of Nogo-B, a neural and cardiovascular regulator. This Homo sapiens (Human) protein is Dehydrodolichyl diphosphate synthase complex subunit NUS1.